A 519-amino-acid chain; its full sequence is S-type anion channel SLAH2 (519 aa).

Positions 1 to 31 (MNNPRSVSPLVSPANHSDLLENQRQSGSGDF) are disordered. The Cytoplasmic segment spans residues 1–140 (MNNPRSVSPL…LPEDKTWPFL (140 aa)). The segment covering 20 to 29 (LENQRQSGSG) has biased composition (polar residues). Phosphoserine occurs at positions 77 and 85. The helical transmembrane segment at 141-161 (LRFPITSYGMCLGVSSQAIMW) threads the bilayer. At 162–185 (KTLATTEAEKFLHVTQVINHVLWW) the chain is on the extracellular side. A helical membrane pass occupies residues 186 to 206 (ISLLLLLAVSITYLFKTILFF). Over 207-220 (EAVRREFRHPIRVN) the chain is Cytoplasmic. A helical transmembrane segment spans residues 221 to 241 (FFFAPLISILFLALGIPHSII). Residues 242–247 (SHLPST) are Extracellular-facing. The chain crosses the membrane as a helical span at residues 248 to 268 (LWYFLMAPILFLEMKIYGQWM). At 269 to 281 (SGGQRRLSKVANP) the chain is on the cytoplasmic side. The chain crosses the membrane as a helical span at residues 282 to 302 (TNHLSIVGNFAGALLGASMGL). Over 303 to 304 (KE) the chain is Extracellular. A helical membrane pass occupies residues 305–325 (GPIFFFAIGLAYYLVLFVTLY). Over 326-340 (QRLPTNETLPKELHP) the chain is Cytoplasmic. The helical transmembrane segment at 341-361 (VFFLFVAAPAVASMAWTKISA) threads the bilayer. Position 362 (Ser-362) is a topological domain, extracellular. The chain crosses the membrane as a helical span at residues 363-383 (FDLGSRLAYFISLFLYFSLVC). The Cytoplasmic segment spans residues 384 to 389 (RINLFR). Residues 390–410 (GFKFSLAWWAYTFPMTAVASA) traverse the membrane as a helical segment. Topologically, residues 411-424 (TIKYSDEVTGVATK) are extracellular. A helical transmembrane segment spans residues 425-445 (ILSVVMSGAATLTVIAVLGLT). Residues 446–519 (VMHAFVQRDL…VDSSTVQNSN (74 aa)) lie on the Cytoplasmic side of the membrane. Residues 495-519 (PEDNQIDLESPPLVNVDSSTVQNSN) form a disordered region. Polar residues predominate over residues 510–519 (VDSSTVQNSN).

The protein belongs to the SLAC1 S-type anion channel family. In terms of assembly, homotrimer. In terms of tissue distribution, expressed in lateral root primordia and tap root tips.

Its subcellular location is the cell membrane. In terms of biological role, slow, weak voltage-dependent S-type anion efflux channel involved in maintenance of anion homeostasis. The protein is S-type anion channel SLAH2 (SLAH2) of Arabidopsis thaliana (Mouse-ear cress).